The primary structure comprises 169 residues: Ribosome maturation factor RimM (169 aa).

Residues 94 to 168 (EEGQYYYHQI…KVIVELLEGL (75 aa)) form the PRC barrel domain.

The protein belongs to the RimM family. Binds ribosomal protein uS19.

It is found in the cytoplasm. An accessory protein needed during the final step in the assembly of 30S ribosomal subunit, possibly for assembly of the head region. Essential for efficient processing of 16S rRNA. May be needed both before and after RbfA during the maturation of 16S rRNA. It has affinity for free ribosomal 30S subunits but not for 70S ribosomes. The chain is Ribosome maturation factor RimM from Limosilactobacillus fermentum (strain NBRC 3956 / LMG 18251) (Lactobacillus fermentum).